We begin with the raw amino-acid sequence, 274 residues long: Undecaprenyl-diphosphatase (274 aa).

The next 7 helical transmembrane spans lie at 4–24, 41–61, 83–103, 108–128, 184–204, 218–238, and 246–266; these read PLFV…FLPI, DATS…AVCW, FVGL…MFHS, LLFN…LILW, AAEF…VYDL, VFAI…KAFI, and FIAF…TWQL.

Belongs to the UppP family.

It localises to the cell inner membrane. It carries out the reaction di-trans,octa-cis-undecaprenyl diphosphate + H2O = di-trans,octa-cis-undecaprenyl phosphate + phosphate + H(+). Catalyzes the dephosphorylation of undecaprenyl diphosphate (UPP). Confers resistance to bacitracin. The polypeptide is Undecaprenyl-diphosphatase (Aromatoleum aromaticum (strain DSM 19018 / LMG 30748 / EbN1) (Azoarcus sp. (strain EbN1))).